A 403-amino-acid polypeptide reads, in one-letter code: Protein IQ-DOMAIN 23 (403 aa).

The disordered stretch occupies residues 1-43 (MGFFGRLFGSKKKSDKAASSRDKRRWSFTTRSSNSSKRAPAVT). Positions 10–17 (SKKKSDKA) match the Nuclear localization signal motif. Polar residues predominate over residues 27-43 (SFTTRSSNSSKRAPAVT). Residues 115–133 (QENIAAMKIQSAFRGYLAR) form a calmodulin-binding region. IQ domains lie at 116-144 (ENIA…ALVK) and 145-167 (LQAL…RMQT). Disordered stretches follow at residues 176 to 208 (RARA…RSLH), 242 to 301 (ILEV…PTSR), and 381 to 403 (GGDS…SFLV). A compositionally biased stretch (basic and acidic residues) spans 257–267 (LRSERNNESPR).

The protein belongs to the IQD family. Binds to multiple calmodulin (CaM) in the presence of Ca(2+) and CaM-like proteins.

The protein resides in the nucleus. It localises to the nucleolus. Its subcellular location is the cytoplasm. It is found in the cytoskeleton. The protein localises to the cell membrane. May be involved in cooperative interactions with calmodulins or calmodulin-like proteins. Recruits calmodulin proteins to microtubules, thus being a potential scaffold in cellular signaling and trafficking. May associate with nucleic acids and regulate gene expression at the transcriptional or post-transcriptional level. The sequence is that of Protein IQ-DOMAIN 23 from Arabidopsis thaliana (Mouse-ear cress).